We begin with the raw amino-acid sequence, 440 residues long: UPF0761 membrane protein Rru_A2625 (440 aa).

7 helical membrane-spanning segments follow: residues 29 to 49 (ILATAGSFTILVLRALITHDI), 61 to 81 (LLALVPLIAIALAILAAFPGF), 117 to 137 (GLTALGVAGLTLTAIILLLTI), 157 to 177 (LLVYWSVLTGGPLLMGLSFSL), 201 to 221 (PTLGPPLLSLTAMTLLYMLVP), 224 to 244 (PVPLFHALAGALVATLASALL), and 264 to 284 (ALAALPAFLVWMYLSWAVVLM).

Belongs to the UPF0761 family.

The protein localises to the cell inner membrane. The sequence is that of UPF0761 membrane protein Rru_A2625 from Rhodospirillum rubrum (strain ATCC 11170 / ATH 1.1.1 / DSM 467 / LMG 4362 / NCIMB 8255 / S1).